A 1162-amino-acid chain; its full sequence is Carbamoyl phosphate synthase large chain (1162 aa).

The segment at 1 to 456 is carboxyphosphate synthetic domain; sequence MPKRTDIKSI…SLQKALRGLE (456 aa). ATP-binding residues include Arg-129, Arg-222, Gly-228, Gly-229, Glu-261, Val-263, Glu-268, Gly-294, Val-295, His-296, Gln-338, and Glu-352. The ATP-grasp 1 domain maps to 186 to 381; it reads ETEWQLGEVE…IAKVAAKLAV (196 aa). Residues Gln-338, Glu-352, and Asn-354 each contribute to the Mg(2+) site. Mn(2+) is bound by residues Gln-338, Glu-352, and Asn-354. The interval 457 to 613 is oligomerization domain; that stretch reads TGLTGFDEIA…PFVGQPRSEA (157 aa). Residues 614–1025 form a carbamoyl phosphate synthetic domain region; sequence EVSDRKKVVI…AFAKAQLGAG (412 aa). Positions 742-954 constitute an ATP-grasp 2 domain; the sequence is QKLLIKLDLN…IAKVAARIMA (213 aa). ATP is bound by residues Arg-778, Thr-838, Leu-840, Glu-845, Gly-870, Ile-871, His-872, Ser-873, Gln-913, and Glu-925. Residues Gln-913, Glu-925, and Asn-927 each contribute to the Mg(2+) site. Positions 913, 925, and 927 each coordinate Mn(2+). The MGS-like domain occupies 1026–1162; sequence VELPREGTVF…VRPLQDYFRS (137 aa). The interval 1026 to 1162 is allosteric domain; it reads VELPREGTVF…VRPLQDYFRS (137 aa).

The protein belongs to the CarB family. As to quaternary structure, composed of two chains; the small (or glutamine) chain promotes the hydrolysis of glutamine to ammonia, which is used by the large (or ammonia) chain to synthesize carbamoyl phosphate. Tetramer of heterodimers (alpha,beta)4. Mg(2+) is required as a cofactor. The cofactor is Mn(2+).

The catalysed reaction is hydrogencarbonate + L-glutamine + 2 ATP + H2O = carbamoyl phosphate + L-glutamate + 2 ADP + phosphate + 2 H(+). It carries out the reaction hydrogencarbonate + NH4(+) + 2 ATP = carbamoyl phosphate + 2 ADP + phosphate + 2 H(+). The protein operates within amino-acid biosynthesis; L-arginine biosynthesis; carbamoyl phosphate from bicarbonate: step 1/1. Its pathway is pyrimidine metabolism; UMP biosynthesis via de novo pathway; (S)-dihydroorotate from bicarbonate: step 1/3. Its function is as follows. Large subunit of the glutamine-dependent carbamoyl phosphate synthetase (CPSase). CPSase catalyzes the formation of carbamoyl phosphate from the ammonia moiety of glutamine, carbonate, and phosphate donated by ATP, constituting the first step of 2 biosynthetic pathways, one leading to arginine and/or urea and the other to pyrimidine nucleotides. The large subunit (synthetase) binds the substrates ammonia (free or transferred from glutamine from the small subunit), hydrogencarbonate and ATP and carries out an ATP-coupled ligase reaction, activating hydrogencarbonate by forming carboxy phosphate which reacts with ammonia to form carbamoyl phosphate. This is Carbamoyl phosphate synthase large chain from Brucella melitensis biotype 1 (strain ATCC 23456 / CCUG 17765 / NCTC 10094 / 16M).